The following is a 62-amino-acid chain: Large ribosomal subunit protein eL24 (62 aa).

The Zn(2+) site is built by cysteine 6, cysteine 9, cysteine 32, and cysteine 36. The C4-type zinc finger occupies 6–36 (CSFCEGTIEPGCGKKYVKKDGSVMHFCSSKC).

Belongs to the eukaryotic ribosomal protein eL24 family. In terms of assembly, part of the 50S ribosomal subunit. Forms a cluster with proteins L3 and L14. Zn(2+) is required as a cofactor.

Binds to the 23S rRNA. The protein is Large ribosomal subunit protein eL24 of Methanococcus maripaludis (strain C5 / ATCC BAA-1333).